Consider the following 384-residue polypeptide: Succinyl-diaminopimelate desuccinylase (384 aa).

His69 provides a ligand contact to Zn(2+). The active site involves Asp71. Residue Asp103 participates in Zn(2+) binding. Glu137 (proton acceptor) is an active-site residue. Zn(2+)-binding residues include Glu138, Glu166, and His355.

The protein belongs to the peptidase M20A family. DapE subfamily. Homodimer. It depends on Zn(2+) as a cofactor. Co(2+) is required as a cofactor.

It catalyses the reaction N-succinyl-(2S,6S)-2,6-diaminopimelate + H2O = (2S,6S)-2,6-diaminopimelate + succinate. The protein operates within amino-acid biosynthesis; L-lysine biosynthesis via DAP pathway; LL-2,6-diaminopimelate from (S)-tetrahydrodipicolinate (succinylase route): step 3/3. Its function is as follows. Catalyzes the hydrolysis of N-succinyl-L,L-diaminopimelic acid (SDAP), forming succinate and LL-2,6-diaminopimelate (DAP), an intermediate involved in the bacterial biosynthesis of lysine and meso-diaminopimelic acid, an essential component of bacterial cell walls. The protein is Succinyl-diaminopimelate desuccinylase of Rickettsia canadensis (strain McKiel).